Reading from the N-terminus, the 207-residue chain is ATP synthase subunit a (207 aa).

Transmembrane regions (helical) follow at residues 3 to 23 (QHVIMALTVLIVVPVIFTIFA), 62 to 82 (LIASIGLFVFFGNLLGIIPGL), 88 to 108 (NLNTTMALALLVFFIYNFEGI), 119 to 139 (FLGPVPAMAPVFVIIELLSHL), 158 to 178 (LISVVLIMLVPFLIPMPVMLI), and 180 to 200 (LIAVFLQTYVFVVLTTVYIAG).

This sequence belongs to the ATPase A chain family. In terms of assembly, F-type ATPases have 2 components, CF(1) - the catalytic core - and CF(0) - the membrane proton channel. CF(1) has five subunits: alpha(3), beta(3), gamma(1), delta(1), epsilon(1). CF(0) has three main subunits: a(1), b(2) and c(9-12). The alpha and beta chains form an alternating ring which encloses part of the gamma chain. CF(1) is attached to CF(0) by a central stalk formed by the gamma and epsilon chains, while a peripheral stalk is formed by the delta and b chains.

It is found in the cell inner membrane. Key component of the proton channel; it plays a direct role in the translocation of protons across the membrane. This Sulfurihydrogenibium sp. (strain YO3AOP1) protein is ATP synthase subunit a.